The primary structure comprises 70 residues: Probable protein transport protein Sec61 subunit gamma (70 aa).

Topologically, residues 1-33 are cytoplasmic; the sequence is MADNADDLFQIPKNFYKEGSHFIKRCVKPDRKE. A helical transmembrane segment spans residues 34-62; the sequence is FLSISKAVATGFVLMGLIGYIIKLIHIPI. At 63 to 70 the chain is on the extracellular side; the sequence is NKVLVGGA.

The protein belongs to the SecE/SEC61-gamma family. As to quaternary structure, heterotrimeric complex composed of SEC61-alpha, SEC61-beta and SEC61-gamma.

The protein localises to the endoplasmic reticulum membrane. Necessary for protein translocation in the endoplasmic reticulum. The polypeptide is Probable protein transport protein Sec61 subunit gamma (sss1) (Schizosaccharomyces pombe (strain 972 / ATCC 24843) (Fission yeast)).